The sequence spans 636 residues: Serine/threonine-protein kinase hal4 (636 aa).

Residues Met-1 to Ser-11 are compositionally biased toward basic and acidic residues. Disordered stretches follow at residues Met-1–Val-167 and Ala-181–Ala-261. The segment covering Glu-33 to Thr-45 has biased composition (pro residues). 2 stretches are compositionally biased toward polar residues: residues Ala-56–Leu-92 and Asn-113–Lys-124. Over residues Pro-140–Ser-155 the composition is skewed to low complexity. A compositionally biased stretch (polar residues) spans Ala-182 to Thr-226. Residue Ser-218 is modified to Phosphoserine. A compositionally biased stretch (low complexity) spans Asn-234–Ala-261. A phosphothreonine mark is found at Thr-238 and Thr-241. Residue Ser-299 is modified to Phosphoserine. In terms of domain architecture, Protein kinase spans Gly-351 to Val-623. Residues Ile-357–Val-365 and Lys-385 contribute to the ATP site. Asp-481 functions as the Proton acceptor in the catalytic mechanism.

Belongs to the protein kinase superfamily. Ser/Thr protein kinase family. Interacts with sty1.

Its subcellular location is the cytoplasm. The catalysed reaction is L-seryl-[protein] + ATP = O-phospho-L-seryl-[protein] + ADP + H(+). The enzyme catalyses L-threonyl-[protein] + ATP = O-phospho-L-threonyl-[protein] + ADP + H(+). Functionally, promotes K(+) uptake, by the potassium transporter trk1-trk2, which leads to the subsequent cellular resistance to toxic cations such as Na(+), Li(+) and Ca(2+). This Schizosaccharomyces pombe (strain 972 / ATCC 24843) (Fission yeast) protein is Serine/threonine-protein kinase hal4 (hal4).